A 439-amino-acid polypeptide reads, in one-letter code: Cysteine--tRNA ligase (439 aa).

Position 26 (Cys26) interacts with Zn(2+). The 'HIGH' region motif lies at 28–38; it reads PTVYNHVHIGN. Zn(2+) is bound by residues Cys206, His231, and Glu235. The short motif at 263–267 is the 'KMSKS' region element; sequence KMSKS. Lys266 contributes to the ATP binding site.

It belongs to the class-I aminoacyl-tRNA synthetase family. In terms of assembly, monomer. The cofactor is Zn(2+).

The protein localises to the cytoplasm. The catalysed reaction is tRNA(Cys) + L-cysteine + ATP = L-cysteinyl-tRNA(Cys) + AMP + diphosphate. This is Cysteine--tRNA ligase from Malacoplasma penetrans (strain HF-2) (Mycoplasma penetrans).